Consider the following 451-residue polypeptide: Probable multidrug resistance protein NorM (451 aa).

The next 12 membrane-spanning stretches (helical) occupy residues 23–43 (GPVV…TAVI), 53–73 (AAAY…GVML), 101–121 (LALL…FVLP), 132–152 (LVAA…AFIA), 169–189 (VALT…FGWG), 194–214 (LGLA…AALL), 243–263 (WPIG…TLLM), 277–297 (TMQT…ATGV), 316–336 (LVGL…ELAA), 355–375 (LIAA…MDGL), 391–411 (VPLL…GSVL), and 422–442 (LWFG…GRFL).

Belongs to the multi antimicrobial extrusion (MATE) (TC 2.A.66.1) family.

It localises to the cell membrane. In terms of biological role, multidrug efflux pump. In Deinococcus radiodurans (strain ATCC 13939 / DSM 20539 / JCM 16871 / CCUG 27074 / LMG 4051 / NBRC 15346 / NCIMB 9279 / VKM B-1422 / R1), this protein is Probable multidrug resistance protein NorM (norM).